The primary structure comprises 45 residues: uncharacterized protein (45 aa).

The segment at 18–45 is disordered; sequence RRGRIGVQPSPERRSEVVGPFPLARSLS.

This is an uncharacterized protein from Homo sapiens (Human).